We begin with the raw amino-acid sequence, 461 residues long: tRNA modification GTPase MnmE (461 aa).

The (6S)-5-formyl-5,6,7,8-tetrahydrofolate site is built by Lys32, Glu89, and Lys128. Residues 224–387 (GHALSIVGKP…LSQKISAFFP (164 aa)) form the TrmE-type G domain. A K(+)-binding site is contributed by Asn234. Residues 234 to 239 (NAGKSS), 253 to 259 (SDIKGTT), and 278 to 281 (DTAG) each bind GTP. Ser238 lines the Mg(2+) pocket. Residues Ser253, Ile255, and Thr258 each contribute to the K(+) site. Residue Thr259 coordinates Mg(2+). Lys461 contacts (6S)-5-formyl-5,6,7,8-tetrahydrofolate.

Belongs to the TRAFAC class TrmE-Era-EngA-EngB-Septin-like GTPase superfamily. TrmE GTPase family. As to quaternary structure, homodimer. Heterotetramer of two MnmE and two MnmG subunits. The cofactor is K(+).

It is found in the cytoplasm. Functionally, exhibits a very high intrinsic GTPase hydrolysis rate. Involved in the addition of a carboxymethylaminomethyl (cmnm) group at the wobble position (U34) of certain tRNAs, forming tRNA-cmnm(5)s(2)U34. The sequence is that of tRNA modification GTPase MnmE from Helicobacter pylori (strain ATCC 700392 / 26695) (Campylobacter pylori).